We begin with the raw amino-acid sequence, 291 residues long: 2-C-methyl-D-erythritol 4-phosphate cytidylyltransferase (291 aa).

The segment at Met-1 to Ala-23 is disordered.

It belongs to the IspD/TarI cytidylyltransferase family. IspD subfamily.

It carries out the reaction 2-C-methyl-D-erythritol 4-phosphate + CTP + H(+) = 4-CDP-2-C-methyl-D-erythritol + diphosphate. Its pathway is isoprenoid biosynthesis; isopentenyl diphosphate biosynthesis via DXP pathway; isopentenyl diphosphate from 1-deoxy-D-xylulose 5-phosphate: step 2/6. In terms of biological role, catalyzes the formation of 4-diphosphocytidyl-2-C-methyl-D-erythritol from CTP and 2-C-methyl-D-erythritol 4-phosphate (MEP). The sequence is that of 2-C-methyl-D-erythritol 4-phosphate cytidylyltransferase from Bifidobacterium longum (strain NCC 2705).